A 187-amino-acid chain; its full sequence is MQVSPAIVKGIAVSSLGLYAGILTSSTVISITTPINVLTQHLKNVLCTLGCWSTVLGGLATGAFGLSYYLAAPGERPNYLLCGLGVAPLSAAYLYLVSLFNHKLAPKCTRDQNDLEKQKDEKLPQHHPEVKDGEAACPFSKMNNAKTLKPESERSVKCHSYMSLHMSIVTGITIFTFGKCILDGFKA.

3 consecutive transmembrane segments (helical) span residues 11 to 31 (IAVSSLGLYAGILTSSTVISI), 45 to 65 (VLCTLGCWSTVLGGLATGAFG), and 80 to 100 (LLCGLGVAPLSAAYLYLVSLF). The segment covering 114–134 (DLEKQKDEKLPQHHPEVKDGE) has biased composition (basic and acidic residues). Positions 114–135 (DLEKQKDEKLPQHHPEVKDGEA) are disordered. Residues 162 to 182 (MSLHMSIVTGITIFTFGKCIL) traverse the membrane as a helical segment.

This sequence belongs to the ATG33 family.

It is found in the membrane. The protein is Protein SCM4 (SCM4) of Saccharomyces cerevisiae (strain ATCC 204508 / S288c) (Baker's yeast).